A 104-amino-acid chain; its full sequence is Large ribosomal subunit protein uL24 (104 aa).

This sequence belongs to the universal ribosomal protein uL24 family. As to quaternary structure, part of the 50S ribosomal subunit.

Functionally, one of two assembly initiator proteins, it binds directly to the 5'-end of the 23S rRNA, where it nucleates assembly of the 50S subunit. Its function is as follows. One of the proteins that surrounds the polypeptide exit tunnel on the outside of the subunit. The protein is Large ribosomal subunit protein uL24 of Buchnera aphidicola subsp. Acyrthosiphon pisum (strain 5A).